We begin with the raw amino-acid sequence, 148 residues long: Small ribosomal subunit protein bS16 (148 aa).

The interval 107 to 148 (AAARAAAGAEDRPATTPKKAKKAASADGADAPAADAPTAAGQ) is disordered. Residues 129–148 (AASADGADAPAADAPTAAGQ) are compositionally biased toward low complexity.

The protein belongs to the bacterial ribosomal protein bS16 family.

This chain is Small ribosomal subunit protein bS16, found in Frankia alni (strain DSM 45986 / CECT 9034 / ACN14a).